A 233-amino-acid polypeptide reads, in one-letter code: Adenosine 5'-phosphosulfate reductase 1 (233 aa).

Positions 120, 121, 203, and 206 each coordinate [4Fe-4S] cluster. Cys-229 (nucleophile; cysteine thiosulfonate intermediate) is an active-site residue.

Belongs to the PAPS reductase family. CysH subfamily. [4Fe-4S] cluster is required as a cofactor.

It is found in the cytoplasm. It catalyses the reaction [thioredoxin]-disulfide + sulfite + AMP + 2 H(+) = adenosine 5'-phosphosulfate + [thioredoxin]-dithiol. It participates in sulfur metabolism; hydrogen sulfide biosynthesis; sulfite from sulfate. Its function is as follows. Catalyzes the formation of sulfite from adenosine 5'-phosphosulfate (APS) using thioredoxin as an electron donor. This Bacillus subtilis (strain 168) protein is Adenosine 5'-phosphosulfate reductase 1 (cysH).